Consider the following 426-residue polypeptide: Glutamate-1-semialdehyde 2,1-aminomutase (426 aa).

The residue at position 265 (Lys-265) is an N6-(pyridoxal phosphate)lysine.

Belongs to the class-III pyridoxal-phosphate-dependent aminotransferase family. HemL subfamily. Homodimer. Pyridoxal 5'-phosphate serves as cofactor.

The protein localises to the cytoplasm. It catalyses the reaction (S)-4-amino-5-oxopentanoate = 5-aminolevulinate. It participates in porphyrin-containing compound metabolism; protoporphyrin-IX biosynthesis; 5-aminolevulinate from L-glutamyl-tRNA(Glu): step 2/2. The polypeptide is Glutamate-1-semialdehyde 2,1-aminomutase (Yersinia pseudotuberculosis serotype O:1b (strain IP 31758)).